Reading from the N-terminus, the 314-residue chain is Nucleotide-binding protein CE1710 (314 aa).

A disordered region spans residues 1-29; that stretch reads MNQTPGSTVPETATPVTSPASSPSAPETT. Positions 7-29 are enriched in low complexity; that stretch reads STVPETATPVTSPASSPSAPETT. ATP is bound at residue 37-44; it reads GMSGAGLS. 88-91 is a binding site for GTP; sequence DVRS.

The protein belongs to the RapZ-like family.

Its function is as follows. Displays ATPase and GTPase activities. The polypeptide is Nucleotide-binding protein CE1710 (Corynebacterium efficiens (strain DSM 44549 / YS-314 / AJ 12310 / JCM 11189 / NBRC 100395)).